Reading from the N-terminus, the 577-residue chain is Moesin (577 aa).

The FERM domain maps to 2–295 (PKTISVRVTT…GNHELYMRRR (294 aa)). The residue at position 74 (Ser-74) is a Phosphoserine. Lys-79 is modified (N6-acetyllysine). Lys-83 is subject to N6-succinyllysine. The short motif at 115 to 120 (IYCPPE) is the [IL]-x-C-x-x-[DE] motif element. Tyr-116 carries the phosphotyrosine modification. Cys-117 is modified (S-nitrosocysteine). 2 positions are modified to N6-acetyllysine: Lys-139 and Lys-165. Disordered regions lie at residues 322 to 342 (LLENEKKKRELAEKEKEKIER), 358 to 453 (TKKA…QMVQ), and 468 to 549 (STPH…AENM). Positions 358-401 (TKKAQQELEEQTRRALELEQERKRAQSEAEKLAKERQEAEEAKE) are enriched in basic and acidic residues. Ser-407 bears the Phosphoserine mark. 2 stretches are compositionally biased toward basic and acidic residues: residues 438 to 447 (KESEAEECHQ) and 492 to 519 (AELRADAMAKDRSEEERTTEAEKNERVQ). A Phosphoserine modification is found at Ser-527. The segment covering 531-549 (NARDESKKTTNDMIHAENM) has biased composition (basic and acidic residues). At Thr-558 the chain carries Phosphothreonine; by ROCK2 and STK10.

As to quaternary structure, in resting T-cells, part of a PAG1-NHERF1-MSN complex which is disrupted upon TCR activation. Interacts with NHERF1. Interacts with PPP1R16B. Interacts with PDZD8. Interacts with SELPLG and SYK; these interactions mediate the activation of SYK by SELPLG. Interacts with PDPN (via cytoplasmic domain); this interaction activates RHOA and promotes epithelial-mesenchymal transition. Interacts with SPN/CD43 cytoplasmic tail. Interacts with CD44. Interacts with ICAM2. Interacts with ICAM3 (via C-terminus). Interacts with PDZD8. Interacts with F-actin. Interacts with CD46. Interacts with PTPN6. In terms of processing, phosphorylation on Thr-558 is crucial for the formation of microvilli-like structures. Phosphorylation by ROCK2 suppresses the head-to-tail association of the N-terminal and C-terminal halves resulting in an opened conformation which is capable of actin and membrane-binding. Phosphorylation on Thr-558 by STK10 negatively regulates lymphocyte migration and polarization. S-nitrosylation of Cys-117 is induced by interferon-gamma and oxidatively-modified low-densitity lipoprotein (LDL(ox)) implicating the iNOS-S100A8/9 transnitrosylase complex.

The protein localises to the cell membrane. It localises to the cytoplasm. The protein resides in the cytoskeleton. Its subcellular location is the apical cell membrane. It is found in the cell projection. The protein localises to the microvillus membrane. It localises to the microvillus. Its activity is regulated as follows. A head-to-tail association, of the N-terminal and C-terminal halves results in a closed conformation (inactive form) which is incapable of actin or membrane-binding. In terms of biological role, ezrin-radixin-moesin (ERM) family protein that connects the actin cytoskeleton to the plasma membrane and thereby regulates the structure and function of specific domains of the cell cortex. Tethers actin filaments by oscillating between a resting and an activated state providing transient interactions between moesin and the actin cytoskeleton. Once phosphorylated on its C-terminal threonine, moesin is activated leading to interaction with F-actin and cytoskeletal rearrangement. These rearrangements regulate many cellular processes, including cell shape determination, membrane transport, and signal transduction. The role of moesin is particularly important in immunity acting on both T and B-cells homeostasis and self-tolerance, regulating lymphocyte egress from lymphoid organs. Modulates phagolysosomal biogenesis in macrophages. Participates also in immunologic synapse formation. The protein is Moesin of Rattus norvegicus (Rat).